Here is a 52-residue protein sequence, read N- to C-terminus: Conotoxin reg3h (52 aa).

Ala1 is a signal peptide. The propeptide occupies 2 to 33 (LPLDGDQPADQPAERMQDISPELNPLFHPVKR). Cystine bridges form between Cys35/Cys49, Cys36/Cys47, and Cys41/Cys50. 3 positions are modified to 4-hydroxyproline: Pro38, Pro48, and Pro51. Asn52 bears the Asparagine amide mark.

As to expression, expressed by the venom duct.

It is found in the secreted. In Conus regius (Crown cone), this protein is Conotoxin reg3h.